The following is a 329-amino-acid chain: Beta-ketoacyl-[acyl-carrier-protein] synthase III (329 aa).

Residues Cys-123 and His-256 contribute to the active site. Positions Gln-257–Arg-261 are ACP-binding. The active site involves Asn-286.

It belongs to the thiolase-like superfamily. FabH family. As to quaternary structure, homodimer.

The protein resides in the cytoplasm. It catalyses the reaction malonyl-[ACP] + acetyl-CoA + H(+) = 3-oxobutanoyl-[ACP] + CO2 + CoA. It participates in lipid metabolism; fatty acid biosynthesis. Functionally, catalyzes the condensation reaction of fatty acid synthesis by the addition to an acyl acceptor of two carbons from malonyl-ACP. Catalyzes the first condensation reaction which initiates fatty acid synthesis and may therefore play a role in governing the total rate of fatty acid production. Possesses both acetoacetyl-ACP synthase and acetyl transacylase activities. Its substrate specificity determines the biosynthesis of branched-chain and/or straight-chain of fatty acids. This is Beta-ketoacyl-[acyl-carrier-protein] synthase III from Burkholderia orbicola (strain AU 1054).